We begin with the raw amino-acid sequence, 238 residues long: MIAIPAIDLREGACVQLVGGSYAAEKVRVEEPLEALKQWRRHGFRAFHVVDLDAALGKGSNADAIFQLTAYERGLTFSVGGGVRDSDRVETVLSGGAEFVVVGTRAIEDAGWLADIANRFPGRVVVAADVKGREVVTRGWTAGSHRDIREVLAAFEPLPLGGLLVTAVHKEGQLSGVDLPLMREVASTSRHRLYASGGVTTMEDLRALAAAGAYGAVIGMALYTGRLDASAVAREFAG.

The Proton acceptor role is filled by Asp8. Asp129 (proton donor) is an active-site residue.

It belongs to the HisA/HisF family.

The protein localises to the cytoplasm. The catalysed reaction is 1-(5-phospho-beta-D-ribosyl)-5-[(5-phospho-beta-D-ribosylamino)methylideneamino]imidazole-4-carboxamide = 5-[(5-phospho-1-deoxy-D-ribulos-1-ylimino)methylamino]-1-(5-phospho-beta-D-ribosyl)imidazole-4-carboxamide. Its pathway is amino-acid biosynthesis; L-histidine biosynthesis; L-histidine from 5-phospho-alpha-D-ribose 1-diphosphate: step 4/9. This chain is 1-(5-phosphoribosyl)-5-[(5-phosphoribosylamino)methylideneamino] imidazole-4-carboxamide isomerase, found in Myxococcus xanthus (strain DK1622).